Here is a 355-residue protein sequence, read N- to C-terminus: Erythronate-4-phosphate dehydrogenase (355 aa).

Substrate is bound by residues S45 and T66. NAD(+) is bound at residue D146. Residue R206 is part of the active site. D229 contacts NAD(+). E234 is a catalytic residue. Residue H251 is the Proton donor of the active site. Residue G254 participates in NAD(+) binding. Y255 is a substrate binding site.

It belongs to the D-isomer specific 2-hydroxyacid dehydrogenase family. PdxB subfamily. In terms of assembly, homodimer.

Its subcellular location is the cytoplasm. The catalysed reaction is 4-phospho-D-erythronate + NAD(+) = (R)-3-hydroxy-2-oxo-4-phosphooxybutanoate + NADH + H(+). It participates in cofactor biosynthesis; pyridoxine 5'-phosphate biosynthesis; pyridoxine 5'-phosphate from D-erythrose 4-phosphate: step 2/5. Functionally, catalyzes the oxidation of erythronate-4-phosphate to 3-hydroxy-2-oxo-4-phosphonooxybutanoate. The protein is Erythronate-4-phosphate dehydrogenase of Acinetobacter baumannii (strain ATCC 17978 / DSM 105126 / CIP 53.77 / LMG 1025 / NCDC KC755 / 5377).